The chain runs to 373 residues: Anhydro-N-acetylmuramic acid kinase (373 aa).

12 to 19 (GTSLDGVD) provides a ligand contact to ATP.

The protein belongs to the anhydro-N-acetylmuramic acid kinase family.

It catalyses the reaction 1,6-anhydro-N-acetyl-beta-muramate + ATP + H2O = N-acetyl-D-muramate 6-phosphate + ADP + H(+). The protein operates within amino-sugar metabolism; 1,6-anhydro-N-acetylmuramate degradation. Its pathway is cell wall biogenesis; peptidoglycan recycling. Functionally, catalyzes the specific phosphorylation of 1,6-anhydro-N-acetylmuramic acid (anhMurNAc) with the simultaneous cleavage of the 1,6-anhydro ring, generating MurNAc-6-P. Is required for the utilization of anhMurNAc either imported from the medium or derived from its own cell wall murein, and thus plays a role in cell wall recycling. The polypeptide is Anhydro-N-acetylmuramic acid kinase (Salmonella gallinarum (strain 287/91 / NCTC 13346)).